The primary structure comprises 551 residues: Glucose-6-phosphate isomerase 2 (551 aa).

E359 serves as the catalytic Proton donor. Active-site residues include H390 and K514.

This sequence belongs to the GPI family.

The protein resides in the cytoplasm. The enzyme catalyses alpha-D-glucose 6-phosphate = beta-D-fructose 6-phosphate. The protein operates within carbohydrate biosynthesis; gluconeogenesis. It functions in the pathway carbohydrate degradation; glycolysis; D-glyceraldehyde 3-phosphate and glycerone phosphate from D-glucose: step 2/4. Catalyzes the reversible isomerization of glucose-6-phosphate to fructose-6-phosphate. This Streptomyces coelicolor (strain ATCC BAA-471 / A3(2) / M145) protein is Glucose-6-phosphate isomerase 2.